We begin with the raw amino-acid sequence, 152 residues long: Small ribosomal subunit protein bS6 (152 aa).

Positions 96–152 (HEEGPSAMLQKRDRDDRGPREGGDRGPRREFGDRPPRRDGDFQRGPRPDRAPREDRA) are disordered.

The protein belongs to the bacterial ribosomal protein bS6 family.

Functionally, binds together with bS18 to 16S ribosomal RNA. In Rhizobium etli (strain ATCC 51251 / DSM 11541 / JCM 21823 / NBRC 15573 / CFN 42), this protein is Small ribosomal subunit protein bS6.